The chain runs to 454 residues: Golgi reassembly-stacking protein 2 (454 aa).

The N-myristoyl glycine moiety is linked to residue Gly2. 2 PDZ GRASP-type domains span residues 15–105 (EGYH…FCSF) and 111–199 (NVWH…YGYL). Positions 15-215 (EGYHVLRVQE…PFEEGKKISL (201 aa)) are GRASP. Residues Arg30 and Arg47 each carry the dimethylated arginine modification. Residues 194-199 (IGYGYL) form an important for membrane binding region. Phosphoserine is present on Ser214. The residue at position 222 (Thr222) is a Phosphothreonine. Thr225 carries the phosphothreonine; by MAPK modification. Residues 377–454 (EGSSAASAGE…VTDANASGAS (78 aa)) form a disordered region. Ser411 bears the Phosphoserine mark. Thr435 carries the phosphothreonine modification. A phosphoserine mark is found at Ser443 and Ser451.

This sequence belongs to the GORASP family. As to quaternary structure, homodimer. Homooligomer. ER stress induces phosphorylation-dependent monomerization. Interacts with BLZF1/Golgin 45. Identified in a complex with RAB2 and GORASP2. Interacts with JAM2 and JAM3. Interacts with members of the p24 cargo receptors. Interacts with CNIH1 and the cytoplasmic domain of transmembrane TGFA, prior its transit in the trans-Golgi. Interacts with KCTD5. Interacts with TMED2 and TMED3. Interacts with SEC16A in response to ER stress. Interacts (via PDZ GRASP-type 1 domain) with core-glycosylated CFTR in response to ER stress. In terms of processing, myristoylated. Myristoylation is essential for the Golgi targeting. Palmitoylated. Post-translationally, phosphorylated in mitotic cells. ER stress-induced phosphorylation at Ser-443 induces monomerization and subsequent relocalization from Golgi to ER which is essential for mediating unconventional (ER/Golgi-independent) trafficking of CFTR to the cell membrane. In terms of tissue distribution, detected in lung, brain, heart, liver and testis.

It localises to the golgi apparatus membrane. Its subcellular location is the endoplasmic reticulum membrane. It is found in the golgi apparatus. In terms of biological role, key structural protein of the Golgi apparatus. The membrane cisternae of the Golgi apparatus adhere to each other to form stacks, which are aligned side by side to form the Golgi ribbon. Acting in concert with GORASP1/GRASP65, is required for the formation and maintenance of the Golgi ribbon, and may be dispensable for the formation of stacks. However, other studies suggest that GORASP2 plays a role in the assembly and membrane stacking of the Golgi cisternae, and in the process by which Golgi stacks reform after breakdown during mitosis and meiosis. May regulate the intracellular transport and presentation of a defined set of transmembrane proteins, such as transmembrane TGFA. Required for normal acrosome formation during spermiogenesis and normal male fertility, probably by promoting colocalization of JAM2 and JAM3 at contact sites between germ cells and Sertoli cells. Mediates ER stress-induced unconventional (ER/Golgi-independent) trafficking of core-glycosylated CFTR to cell membrane. The polypeptide is Golgi reassembly-stacking protein 2 (Gorasp2) (Rattus norvegicus (Rat)).